We begin with the raw amino-acid sequence, 149 residues long: Transcription antitermination protein NusB (149 aa).

The protein belongs to the NusB family.

In terms of biological role, involved in transcription antitermination. Required for transcription of ribosomal RNA (rRNA) genes. Binds specifically to the boxA antiterminator sequence of the ribosomal RNA (rrn) operons. The chain is Transcription antitermination protein NusB from Caulobacter vibrioides (strain ATCC 19089 / CIP 103742 / CB 15) (Caulobacter crescentus).